Reading from the N-terminus, the 489-residue chain is UDP-N-acetylmuramate--L-alanine ligase (489 aa).

128–134 serves as a coordination point for ATP; sequence GTHGKTT.

This sequence belongs to the MurCDEF family.

It localises to the cytoplasm. The catalysed reaction is UDP-N-acetyl-alpha-D-muramate + L-alanine + ATP = UDP-N-acetyl-alpha-D-muramoyl-L-alanine + ADP + phosphate + H(+). It functions in the pathway cell wall biogenesis; peptidoglycan biosynthesis. Functionally, cell wall formation. This Shewanella pealeana (strain ATCC 700345 / ANG-SQ1) protein is UDP-N-acetylmuramate--L-alanine ligase.